The chain runs to 379 residues: Cysteine-rich receptor-like protein kinase 44 (379 aa).

The Protein kinase domain maps to 56-336 (FSPYNHLGEG…VRMLNANSFT (281 aa)). ATP contacts are provided by residues 62 to 70 (LGEGGFGAV) and Lys-84. Tyr-129 bears the Phosphotyrosine mark. Asp-181 acts as the Proton acceptor in catalysis. Ser-185 is subject to Phosphoserine. The residue at position 223 (Thr-223) is a Phosphothreonine. Tyr-231 carries the phosphotyrosine modification.

Belongs to the protein kinase superfamily. Ser/Thr protein kinase family. CRK subfamily.

It carries out the reaction L-seryl-[protein] + ATP = O-phospho-L-seryl-[protein] + ADP + H(+). The catalysed reaction is L-threonyl-[protein] + ATP = O-phospho-L-threonyl-[protein] + ADP + H(+). This chain is Cysteine-rich receptor-like protein kinase 44, found in Arabidopsis thaliana (Mouse-ear cress).